The sequence spans 475 residues: Peroxisome proliferator-activated receptor gamma (475 aa).

T54 carries an O-linked (GlcNAc) threonine glycan. S82 bears the Phosphoserine; by MAPK mark. Positions 106–180 (AIECRVCGDK…VGMSHNAIRF (75 aa)) form a DNA-binding region, nuclear receptor. 2 consecutive NR C4-type zinc fingers follow at residues 109–129 (CRVC…CEGC) and 146–168 (CDLN…FQKC). The interval 175-250 (HNAIRFGRMP…DKSPFVIYDM (76 aa)) is interaction with FAM120B. The NR LBD domain maps to 208–473 (DLRALAKHLY…HPLLQEIYKD (266 aa)). A Glycyl lysine isopeptide (Lys-Gly) (interchain with G-Cter in ubiquitin) cross-link involves residue K222. Positions 465–473 (PLLQEIYKD) match the 9aaTAD motif.

Belongs to the nuclear hormone receptor family. NR1 subfamily. As to quaternary structure, interacts with FOXO1 (acetylated form). Heterodimer with other nuclear receptors, such as RXRA. The heterodimer with the retinoic acid receptor RXRA is called adipocyte-specific transcription factor ARF6. Interacts with NCOA6 coactivator, leading to a strong increase in transcription of target genes. Interacts with coactivator PPARBP, leading to a mild increase in transcription of target genes. Interacts with NOCA7 in a ligand-inducible manner. Interacts with NCOA1 and NCOA2 LXXLL motifs. Interacts with ASXL1, ASXL2, DNTTIP2, FAM120B, MAP2K1/MEK1, NR0B2, PDPK1, PRDM16, PRMT2 and TGFB1I1. Interacts (when activated by agonist) with PPP5C. Interacts with HELZ2 and THRAP3; the interaction stimulates the transcriptional activity of PPARG. Interacts with PER2, the interaction is ligand dependent and blocks PPARG recruitment to target promoters. Interacts with NOCT. Interacts with ACTN4. Interacts (when in the liganded conformation) with GPS2. Interacts with CRY1 and CRY2 in a ligand-dependent manner. In the absence of hormonal ligand, interacts with TACC1. In macrophages, interacts with PAQR3 and STUB1; the interactions promote PPARG poylubiquitination and STUB1-mediated degradation. In terms of processing, O-GlcNAcylation at Thr-54 reduces transcriptional activity in adipocytes. Post-translationally, phosphorylated at basal conditions and dephosphorylated when treated with the ligand. May be dephosphorylated by PPP5C. The phosphorylated form may be inactive and dephosphorylation induces adipogenic activity. Ubiquitinated by E3 ubiquitin-protein ligase complex containing FBXO9; leading to proteasomal degradation. Ubiquitinated at Lys-222 by TRIM55 leading to proteasomal degradation. Ubiquitinated by E3 ubiquitin-protein ligase STUB1/CHIP; leading to proteasomal degradation.

It is found in the nucleus. The protein localises to the cytoplasm. With respect to regulation, PDPK1 activates its transcriptional activity independently of its kinase activity. Interacts with HELZ2 and THRAP3; the interaction enhances the transcriptional activity of PPARG. Its function is as follows. Nuclear receptor that binds peroxisome proliferators such as hypolipidemic drugs and fatty acids. Once activated by a ligand, the nuclear receptor binds to DNA specific PPAR response elements (PPRE) and modulates the transcription of its target genes, such as acyl-CoA oxidase. It therefore controls the peroxisomal beta-oxidation pathway of fatty acids. Key regulator of adipocyte differentiation and glucose homeostasis. ARF6 acts as a key regulator of the tissue-specific adipocyte P2 (aP2) enhancer. Acts as a critical regulator of gut homeostasis by suppressing NF-kappa-B-mediated pro-inflammatory responses. Plays a role in the regulation of cardiovascular circadian rhythms by regulating the transcription of BMAL1 in the blood vessels. The protein is Peroxisome proliferator-activated receptor gamma (PPARG) of Cricetulus griseus (Chinese hamster).